The chain runs to 261 residues: tRNA pseudouridine synthase A (261 aa).

Catalysis depends on aspartate 51, which acts as the Nucleophile. Tyrosine 109 provides a ligand contact to substrate.

The protein belongs to the tRNA pseudouridine synthase TruA family. Homodimer.

The enzyme catalyses uridine(38/39/40) in tRNA = pseudouridine(38/39/40) in tRNA. Formation of pseudouridine at positions 38, 39 and 40 in the anticodon stem and loop of transfer RNAs. This is tRNA pseudouridine synthase A from Shewanella baltica (strain OS155 / ATCC BAA-1091).